The sequence spans 221 residues: U1 small nuclear ribonucleoprotein C (221 aa).

Residues 4–36 (YFCDYCDTYLTHDSPSVRKTHCNGRKHKENVRV) form a Matrin-type zinc finger. Residues 100–168 (SNPFPTSQAG…PPGAPTLPQP (69 aa)) form a disordered region. Positions 134 to 166 (APAPPRMPGPLLMTPPPGAAAPGMAPPGAPTLP) are enriched in pro residues.

It belongs to the U1 small nuclear ribonucleoprotein C family. As to quaternary structure, U1 snRNP is composed of the 7 core Sm proteins B/B', D1, D2, D3, E, F and G that assemble in a heptameric protein ring on the Sm site of the small nuclear RNA to form the core snRNP, and at least 3 U1 snRNP-specific proteins U1-70K, U1-A and U1-C. U1-C interacts with U1 snRNA and the 5' splice-site region of the pre-mRNA.

It localises to the nucleus. In terms of biological role, component of the spliceosomal U1 snRNP, which is essential for recognition of the pre-mRNA 5' splice-site and the subsequent assembly of the spliceosome. U1-C is directly involved in initial 5' splice-site recognition for both constitutive and regulated alternative splicing. The interaction with the 5' splice-site seems to precede base-pairing between the pre-mRNA and the U1 snRNA. Stimulates commitment or early (E) complex formation by stabilizing the base pairing of the 5' end of the U1 snRNA and the 5' splice-site region. The polypeptide is U1 small nuclear ribonucleoprotein C (Branchiostoma floridae (Florida lancelet)).